We begin with the raw amino-acid sequence, 357 residues long: Ribosomal RNA large subunit methyltransferase M (357 aa).

Residues Ser-183, 216–219 (APGG), Asp-235, Asp-255, and Asp-271 each bind S-adenosyl-L-methionine. The active-site Proton acceptor is the Lys-300.

It belongs to the class I-like SAM-binding methyltransferase superfamily. RNA methyltransferase RlmE family. RlmM subfamily. As to quaternary structure, monomer.

It localises to the cytoplasm. The enzyme catalyses cytidine(2498) in 23S rRNA + S-adenosyl-L-methionine = 2'-O-methylcytidine(2498) in 23S rRNA + S-adenosyl-L-homocysteine + H(+). Catalyzes the 2'-O-methylation at nucleotide C2498 in 23S rRNA. The protein is Ribosomal RNA large subunit methyltransferase M of Pseudomonas syringae pv. tomato (strain ATCC BAA-871 / DC3000).